Reading from the N-terminus, the 757-residue chain is Catalase-peroxidase 2 (757 aa).

Residues 1–26 (MKHPLFNQKVLAGFVSMLLISGSAFA) form the signal peptide. Positions 126 to 248 (WHSAGTYRTL…LGATHMGLIY (123 aa)) form a cross-link, tryptophyl-tyrosyl-methioninium (Trp-Tyr) (with M-274). Histidine 127 functions as the Proton acceptor in the catalytic mechanism. Positions 248-274 (YVNPEGPKGVPDPLGSAKNIRVAFERM) form a cross-link, tryptophyl-tyrosyl-methioninium (Tyr-Met) (with W-126). Histidine 289 contributes to the heme b binding site.

This sequence belongs to the peroxidase family. Peroxidase/catalase subfamily. In terms of assembly, homodimer or homotetramer. Heme b serves as cofactor. Formation of the three residue Trp-Tyr-Met cross-link is important for the catalase, but not the peroxidase activity of the enzyme.

It carries out the reaction H2O2 + AH2 = A + 2 H2O. The enzyme catalyses 2 H2O2 = O2 + 2 H2O. Functionally, bifunctional enzyme with both catalase and broad-spectrum peroxidase activity. This Shewanella frigidimarina (strain NCIMB 400) protein is Catalase-peroxidase 2.